The primary structure comprises 124 residues: Glycine cleavage system H protein (124 aa).

The region spanning 22–103 is the Lipoyl-binding domain; that stretch reads VFVVGITDNA…AYTAWIFKIK (82 aa). At K63 the chain carries N6-lipoyllysine.

Belongs to the GcvH family. In terms of assembly, the glycine cleavage system is composed of four proteins: P, T, L and H. Requires (R)-lipoate as cofactor.

In terms of biological role, the glycine cleavage system catalyzes the degradation of glycine. The H protein shuttles the methylamine group of glycine from the P protein to the T protein. The polypeptide is Glycine cleavage system H protein (Bordetella pertussis (strain Tohama I / ATCC BAA-589 / NCTC 13251)).